The primary structure comprises 124 residues: Small ribosomal subunit protein uS12 (124 aa).

The segment at 1 to 29 is disordered; sequence MATINQLVRKGRKRRVAKSNVPALEASPQ. Position 89 is a 3-methylthioaspartic acid (D89). A disordered region spans residues 101-124; it reads AADTAGVDKRRQGRSKYGAKRPKS. Basic residues predominate over residues 111–124; the sequence is RQGRSKYGAKRPKS.

This sequence belongs to the universal ribosomal protein uS12 family. Part of the 30S ribosomal subunit. Contacts proteins S8 and S17. May interact with IF1 in the 30S initiation complex.

In terms of biological role, with S4 and S5 plays an important role in translational accuracy. Its function is as follows. Interacts with and stabilizes bases of the 16S rRNA that are involved in tRNA selection in the A site and with the mRNA backbone. Located at the interface of the 30S and 50S subunits, it traverses the body of the 30S subunit contacting proteins on the other side and probably holding the rRNA structure together. The combined cluster of proteins S8, S12 and S17 appears to hold together the shoulder and platform of the 30S subunit. The chain is Small ribosomal subunit protein uS12 from Alkalilimnicola ehrlichii (strain ATCC BAA-1101 / DSM 17681 / MLHE-1).